Here is a 371-residue protein sequence, read N- to C-terminus: Probable beta-1,3-galactosyltransferase 12 (371 aa).

The interval 1–36 (MPLFSHRFTTASSSSPASPSYYNKPSSKTHKPNSSS) is disordered. The segment covering 11–36 (ASSSSPASPSYYNKPSSKTHKPNSSS) has biased composition (low complexity). A helical; Signal-anchor for type II membrane protein transmembrane segment spans residues 46–66 (VAIIFFSLVSVFIGVAGTIFA). An N-linked (GlcNAc...) asparagine glycan is attached at asparagine 291.

The protein belongs to the glycosyltransferase 31 family. Mn(2+) is required as a cofactor.

It localises to the golgi apparatus membrane. The protein operates within protein modification; protein glycosylation. Its function is as follows. Beta-1,3-galactosyltransferase that transfers galactose from UDP-galactose to substrates with a terminal glycosyl residue. In Arabidopsis thaliana (Mouse-ear cress), this protein is Probable beta-1,3-galactosyltransferase 12 (B3GALT12).